Consider the following 436-residue polypeptide: Xaa-Arg dipeptidase (436 aa).

It belongs to the peptidase M20A family.

It catalyses the reaction beta-alanyl-L-lysine + H2O = beta-alanine + L-lysine. It carries out the reaction beta-alanyl-L-ornithine + H2O = beta-alanine + L-ornithine. The enzyme catalyses N(2)-(4-aminobutanoyl)-L-lysine + H2O = 4-aminobutanoate + L-lysine. The catalysed reaction is N(2)-(4-aminobutanoyl)-L-ornithine + H2O = 4-aminobutanoate + L-ornithine. It catalyses the reaction N(2)-(4-aminobutanoyl)-L-arginine + H2O = 4-aminobutanoate + L-arginine. Its function is as follows. Catalyzes the peptide bond hydrolysis in dipeptides having basic amino acids lysine, ornithine or arginine at C-terminus. Postulated to function in a metabolite repair mechanism by eliminating alternate dipeptide by-products formed during carnosine synthesis. The protein is Xaa-Arg dipeptidase of Homo sapiens (Human).